Reading from the N-terminus, the 732-residue chain is Catalase-peroxidase (732 aa).

Positions 97 to 220 (WHSAGTYRTS…LAAVQMGLIY (124 aa)) form a cross-link, tryptophyl-tyrosyl-methioninium (Trp-Tyr) (with M-246). The active-site Proton acceptor is the H98. A cross-link (tryptophyl-tyrosyl-methioninium (Tyr-Met) (with W-97)) is located at residues 220–246 (YVNPEGPDGNPDPVAAGRDIRETFARM). Position 261 (H261) interacts with heme b.

It belongs to the peroxidase family. Peroxidase/catalase subfamily. As to quaternary structure, homodimer or homotetramer. Requires heme b as cofactor. Formation of the three residue Trp-Tyr-Met cross-link is important for the catalase, but not the peroxidase activity of the enzyme.

The enzyme catalyses H2O2 + AH2 = A + 2 H2O. It carries out the reaction 2 H2O2 = O2 + 2 H2O. Bifunctional enzyme with both catalase and broad-spectrum peroxidase activity. This chain is Catalase-peroxidase, found in Pelodictyon phaeoclathratiforme (strain DSM 5477 / BU-1).